The sequence spans 418 residues: Tyrosine--tRNA ligase (418 aa).

Positions 42-51 (PTAPDLHLGH) match the 'HIGH' region motif. The 'KMSKS' region motif lies at 226-230 (KMSKS). Lys-229 is an ATP binding site. The S4 RNA-binding domain occupies 339-400 (VRLVALLTKS…GKRNFAKVRL (62 aa)).

The protein belongs to the class-I aminoacyl-tRNA synthetase family. TyrS type 2 subfamily. In terms of assembly, homodimer.

The protein resides in the cytoplasm. It carries out the reaction tRNA(Tyr) + L-tyrosine + ATP = L-tyrosyl-tRNA(Tyr) + AMP + diphosphate + H(+). Catalyzes the attachment of tyrosine to tRNA(Tyr) in a two-step reaction: tyrosine is first activated by ATP to form Tyr-AMP and then transferred to the acceptor end of tRNA(Tyr). The protein is Tyrosine--tRNA ligase of Xylella fastidiosa (strain 9a5c).